The chain runs to 435 residues: Enolase (435 aa).

Position 167 (Q167) interacts with (2R)-2-phosphoglycerate. Residue E209 is the Proton donor of the active site. Mg(2+) contacts are provided by D246, E292, and D319. The (2R)-2-phosphoglycerate site is built by K344, R373, S374, and K395. The active-site Proton acceptor is K344.

This sequence belongs to the enolase family. Mg(2+) is required as a cofactor.

The protein localises to the cytoplasm. The protein resides in the secreted. It localises to the cell surface. The catalysed reaction is (2R)-2-phosphoglycerate = phosphoenolpyruvate + H2O. The protein operates within carbohydrate degradation; glycolysis; pyruvate from D-glyceraldehyde 3-phosphate: step 4/5. Its function is as follows. Catalyzes the reversible conversion of 2-phosphoglycerate (2-PG) into phosphoenolpyruvate (PEP). It is essential for the degradation of carbohydrates via glycolysis. The polypeptide is Enolase (Lachnospira eligens (strain ATCC 27750 / DSM 3376 / VPI C15-48 / C15-B4) (Eubacterium eligens)).